Consider the following 474-residue polypeptide: Polyamine oxidase 7 (474 aa).

The first 27 residues, 1–27 (MTKPTTMAIFLSIVLLSMAQLPSLVAG), serve as a signal peptide directing secretion. Glu61 and Arg69 together coordinate FAD. N-linked (GlcNAc...) asparagine glycans are attached at residues Asn103 and Asn150. Val261 contacts FAD. N-linked (GlcNAc...) asparagine glycosylation is present at Asn278. Position 454 (Glu454) interacts with FAD.

It belongs to the flavin monoamine oxidase family. Requires FAD as cofactor.

The protein localises to the secreted. It localises to the extracellular space. Its subcellular location is the apoplast. The enzyme catalyses spermine + O2 + H2O = 3-aminopropanal + spermidine + H2O2. It catalyses the reaction N(1)-acetylspermine + O2 + H2O = 3-acetamidopropanal + spermidine + H2O2. The catalysed reaction is norspermine + O2 + H2O = norspermidine + 3-aminopropanal + H2O2. It carries out the reaction spermidine + O2 + H2O = 3-aminopropanal + putrescine + H2O2. The enzyme catalyses N(1)-acetylspermidine + O2 + H2O = 3-acetamidopropanal + putrescine + H2O2. It catalyses the reaction thermospermine + O2 + H2O = 3-aminopropanal + spermidine + H2O2. It participates in amine and polyamine degradation; spermidine degradation. The protein operates within amine and polyamine degradation; spermine degradation. Flavoenzyme involved in polyamine back-conversion. Catalyzes the oxidation of the secondary amino group of polyamines, such as spermine, spermidine and their acetyl derivatives. Substrate preference is spermine &gt; spermidine &gt; N(1)-acetylspermine &gt; N(1)-acetylspermidine &gt; norspermine &gt; thermospermine. No activity detected when putrescine is used as substrate. May play a role in producing hydrogen peroxide for secondary wall thickening through lignin formation during anther development. This chain is Polyamine oxidase 7, found in Oryza sativa subsp. japonica (Rice).